The chain runs to 106 residues: Iron-sulfur cluster assembly protein CyaY (106 aa).

This sequence belongs to the frataxin family.

In terms of biological role, involved in iron-sulfur (Fe-S) cluster assembly. May act as a regulator of Fe-S biogenesis. In Salmonella newport (strain SL254), this protein is Iron-sulfur cluster assembly protein CyaY.